Here is a 380-residue protein sequence, read N- to C-terminus: Forkhead box protein F1 (380 aa).

Residues 1-19 (MTAEVQQPSVQTPAHSSPM) show a composition bias toward polar residues. The interval 1-49 (MTAEVQQPSVQTPAHSSPMTEKPVQTPVMETSSSSSSTKAKKTNAGIRR) is disordered. Positions 52–146 (KPPYSYIALI…EEGSFRRRPR (95 aa)) form a DNA-binding region, fork-head.

The protein localises to the nucleus. This chain is Forkhead box protein F1 (foxf1), found in Danio rerio (Zebrafish).